Reading from the N-terminus, the 539-residue chain is GMP synthase [glutamine-hydrolyzing] (539 aa).

The 199-residue stretch at lysine 4–aspartate 202 folds into the Glutamine amidotransferase type-1 domain. Cysteine 81 functions as the Nucleophile in the catalytic mechanism. Catalysis depends on residues histidine 176 and glutamate 178. A GMPS ATP-PPase domain is found at tryptophan 203–arginine 395. Serine 230–serine 236 provides a ligand contact to ATP.

In terms of assembly, homodimer.

The catalysed reaction is XMP + L-glutamine + ATP + H2O = GMP + L-glutamate + AMP + diphosphate + 2 H(+). Its pathway is purine metabolism; GMP biosynthesis; GMP from XMP (L-Gln route): step 1/1. Its function is as follows. Catalyzes the synthesis of GMP from XMP. The sequence is that of GMP synthase [glutamine-hydrolyzing] from Burkholderia vietnamiensis (strain G4 / LMG 22486) (Burkholderia cepacia (strain R1808)).